We begin with the raw amino-acid sequence, 680 residues long: Oligopeptidase A (680 aa).

Position 469 (histidine 469) interacts with Zn(2+). Glutamate 470 is a catalytic residue. Residues histidine 473 and histidine 476 each coordinate Zn(2+).

The protein belongs to the peptidase M3 family. Zn(2+) serves as cofactor.

The catalysed reaction is Hydrolysis of oligopeptides, with broad specificity. Gly or Ala commonly occur as P1 or P1' residues, but more distant residues are also important, as is shown by the fact that Z-Gly-Pro-Gly-|-Gly-Pro-Ala is cleaved, but not Z-(Gly)(5).. Its function is as follows. May play a specific role in the degradation of signal peptides after they are released from precursor forms of secreted proteins. Can cleave N-acetyl-L-Ala(4). This is Oligopeptidase A (prlC) from Salmonella typhimurium (strain LT2 / SGSC1412 / ATCC 700720).